A 342-amino-acid polypeptide reads, in one-letter code: tRNA dimethylallyltransferase (342 aa).

39–46 (GPTGSGKT) lines the ATP pocket. 41–46 (TGSGKT) contacts substrate. The tract at residues 64-67 (DSMQ) is interaction with substrate tRNA.

It belongs to the IPP transferase family. In terms of assembly, monomer. It depends on Mg(2+) as a cofactor.

It catalyses the reaction adenosine(37) in tRNA + dimethylallyl diphosphate = N(6)-dimethylallyladenosine(37) in tRNA + diphosphate. In terms of biological role, catalyzes the transfer of a dimethylallyl group onto the adenine at position 37 in tRNAs that read codons beginning with uridine, leading to the formation of N6-(dimethylallyl)adenosine (i(6)A). This Chlamydia felis (strain Fe/C-56) (Chlamydophila felis) protein is tRNA dimethylallyltransferase.